A 550-amino-acid polypeptide reads, in one-letter code: GMP synthase [glutamine-hydrolyzing] (550 aa).

The 194-residue stretch at 39–232 (RILILDFGSQ…VHKICGCGGL (194 aa)) folds into the Glutamine amidotransferase type-1 domain. Cys116 functions as the Nucleophile in the catalytic mechanism. Catalysis depends on residues His206 and Glu208. In terms of domain architecture, GMPS ATP-PPase spans 233–425 (WTPEHIIDLR…LGLPHSMIYR (193 aa)). An ATP-binding site is contributed by 260–266 (SGGVDSS).

In terms of assembly, homodimer.

The enzyme catalyses XMP + L-glutamine + ATP + H2O = GMP + L-glutamate + AMP + diphosphate + 2 H(+). The protein operates within purine metabolism; GMP biosynthesis; GMP from XMP (L-Gln route): step 1/1. Catalyzes the synthesis of GMP from XMP. This chain is GMP synthase [glutamine-hydrolyzing], found in Acinetobacter baylyi (strain ATCC 33305 / BD413 / ADP1).